A 309-amino-acid polypeptide reads, in one-letter code: Homoserine kinase (309 aa).

91–101 (PIGSGLGSSAC) is a binding site for ATP.

It belongs to the GHMP kinase family. Homoserine kinase subfamily.

It is found in the cytoplasm. It catalyses the reaction L-homoserine + ATP = O-phospho-L-homoserine + ADP + H(+). Its pathway is amino-acid biosynthesis; L-threonine biosynthesis; L-threonine from L-aspartate: step 4/5. Its function is as follows. Catalyzes the ATP-dependent phosphorylation of L-homoserine to L-homoserine phosphate. The sequence is that of Homoserine kinase from Serratia proteamaculans (strain 568).